An 891-amino-acid polypeptide reads, in one-letter code: DNA mismatch repair protein MutS (891 aa).

646–653 (GPNMAGKS) contacts ATP.

It belongs to the DNA mismatch repair MutS family.

This protein is involved in the repair of mismatches in DNA. It is possible that it carries out the mismatch recognition step. This protein has a weak ATPase activity. The polypeptide is DNA mismatch repair protein MutS (Rickettsia typhi (strain ATCC VR-144 / Wilmington)).